The chain runs to 720 residues: MCGIFGYCNFLIEKTRGEIIDTLIEGLQALEYKEYDSSGISIQGDELKSLNIYKQTGKISSLKEEIDLYNLNKNLPFISHCGIAHTRRATHGGLRRANCHPHNSDPSNEFVVVHNGVITNFANLKALLVAKGYVFKSDTDTECIPKLYKHIYDTSIELGYNLDFHVLTNLVLKELEGSYGLLCTSSHFPDEVVAARKGSPLVIGVKGKTDMDVNFVEVEYLDQEEDYLKLNTQTKSSGNVLAAAPVKYNTCLRKSPPLRSQYLRNSTTSTFNHGSSTETPAENGLPRPMEFYLSSDCASLARYVSKVVYLEDNDTAHIYDGELHIHCSKIGSEDFSFRTVQKLELELSKIKKGPYDNFMQKEIYEQCETTKNVMRGRVDAFTNRVVLGGLENWLTELRRAKRIIMIASKSSFHSCLAARPIFEELMEVPVNVELALDFVDRNCCIFRNDVCIFVSRSGETTDTINALNYCIKKEAVTIGVVNCSGSSISRFTHCGVHTNTGPEKGIATTKSYTSQYIALVMIALWMSEDLVSKIERRKEIIQALTIVPSQIKEVLELEPLIIELCDKKLKQHDTFLLLGRGYQFASALEGASKMKEISYVHSESILTDELGHRVLAVTSDNPPIIAFATKDAFSPKIASCIDQIIERKGNPIIICNKGHKIWEQDKQKGNVVTLEVPQTVDCLQGILNVIPLQLISYWLAIKKDIGVDLPRDSAMSAPDI.

C2 (nucleophile; for GATase activity) is an active-site residue. Positions 2–321 (CGIFGYCNFL…DNDTAHIYDG (320 aa)) constitute a Glutamine amidotransferase type-2 domain. Positions 266 to 280 (STTSTFNHGSSTETP) are enriched in polar residues. Residues 266–285 (STTSTFNHGSSTETPAENGL) are disordered. 2 consecutive SIS domains span residues 393 to 532 (WLTE…DLVS) and 565 to 710 (CDKK…VDLP).

It catalyses the reaction D-fructose 6-phosphate + L-glutamine = D-glucosamine 6-phosphate + L-glutamate. Its pathway is nucleotide-sugar biosynthesis; UDP-N-acetyl-alpha-D-glucosamine biosynthesis; alpha-D-glucosamine 6-phosphate from D-fructose 6-phosphate: step 1/1. Involved in amino sugar synthesis (formation of chitin, supplies the amino sugars of asparagine-linked oligosaccharides of glycoproteins). The sequence is that of Putative glutamine--fructose-6-phosphate aminotransferase [isomerizing] from Saccharomyces cerevisiae (strain JAY291) (Baker's yeast).